Here is a 33-residue protein sequence, read N- to C-terminus: Photosystem II reaction center protein Psb30 (33 aa).

Residues 5-25 traverse the membrane as a helical segment; that stretch reads VIAQLTVLTLMVVSGPLVIVL.

It belongs to the Psb30/Ycf12 family. In terms of assembly, PSII is composed of 1 copy each of membrane proteins PsbA, PsbB, PsbC, PsbD, PsbE, PsbF, PsbH, PsbI, PsbJ, PsbK, PsbL, PsbM, PsbT, PsbX, PsbY, PsbZ, Psb30/Ycf12, peripheral proteins of the oxygen-evolving complex and a large number of cofactors. It forms dimeric complexes.

The protein localises to the plastid. Its subcellular location is the chloroplast thylakoid membrane. Its function is as follows. A core subunit of photosystem II (PSII), probably helps stabilize the reaction center. This is Photosystem II reaction center protein Psb30 from Pinus koraiensis (Korean pine).